A 103-amino-acid chain; its full sequence is Small ribosomal subunit protein uS10 (103 aa).

Belongs to the universal ribosomal protein uS10 family. As to quaternary structure, part of the 30S ribosomal subunit.

In terms of biological role, involved in the binding of tRNA to the ribosomes. The protein is Small ribosomal subunit protein uS10 of Borrelia duttonii (strain Ly).